Here is a 185-residue protein sequence, read N- to C-terminus: Proton-translocating ferredoxin:NAD(+) oxidoreductase complex subunit G (185 aa).

The chain crosses the membrane as a helical span at residues threonine 14–isoleucine 34. Position 161 is an FMN phosphoryl threonine (threonine 161).

It belongs to the RnfG family. In terms of assembly, the complex is composed of six subunits: RnfA, RnfB, RnfC, RnfD, RnfE and RnfG. It depends on FMN as a cofactor.

Its subcellular location is the cell membrane. In terms of biological role, part of a membrane-bound complex that couples electron transfer with translocation of ions across the membrane. Couples electron transfer from reduced ferredoxin to NAD(+) with translocation of H(+) out of the cell. Essential for energy conservation during autotrophic growth. Contributes to ATP synthesis during heterotrophic growth. The sequence is that of Proton-translocating ferredoxin:NAD(+) oxidoreductase complex subunit G from Clostridium ljungdahlii (strain ATCC 55383 / DSM 13528 / PETC).